The following is a 643-amino-acid chain: Leukocyte immunoglobulin-like receptor subfamily B member 5 (643 aa).

The N-terminal stretch at 1–23 (MTLTLSVLICLGLNVGPRTCVQA) is a signal peptide. Residues 24–458 (GTLPKPTLWA…PQSGLGRHLG (435 aa)) lie on the Extracellular side of the membrane. 4 Ig-like C2-type domains span residues 27–116 (PKPT…LELV), 111–228 (DPLE…SLLI), 224–313 (PSLL…DPLD), and 337–418 (GENV…LVVS). Cysteines 49 and 98 form a disulfide. An N-linked (GlcNAc...) asparagine glycan is attached at Asn-139. Intrachain disulfides connect Cys-144–Cys-195 and Cys-244–Cys-295. Residues Asn-279 and Asn-339 are each glycosylated (N-linked (GlcNAc...) asparagine). Cys-344 and Cys-395 are joined by a disulfide. Residues 417–433 (VSGPSGDPSLSPTGSTP) show a composition bias toward low complexity. The disordered stretch occupies residues 417 to 449 (VSGPSGDPSLSPTGSTPTPGPEDQPLTPTGLDP). The chain crosses the membrane as a helical span at residues 459 to 479 (VVTGVSVAFVLLLFLLLFLLL). The Cytoplasmic portion of the chain corresponds to 480-643 (RHRHQSKHRT…PSIYAPLAIH (164 aa)). Positions 493 to 643 (FYRPAGAAGP…PSIYAPLAIH (151 aa)) are disordered. Position 514 is a phosphoserine (Ser-514). Basic and acidic residues-rich tracts occupy residues 531–549 (TQPK…RDED), 557–567 (EVKHSRPRREM), and 579–592 (LDTK…DRQM). An ITIM motif 1 motif is present at residues 605 to 610 (VTYAQL). The span at 615–631 (LRREATEPPPSQEREPP) shows a compositional bias: basic and acidic residues. An ITIM motif 2 motif is present at residues 635-640 (SIYAPL).

The protein localises to the membrane. Its function is as follows. May act as receptor for class I MHC antigens. The protein is Leukocyte immunoglobulin-like receptor subfamily B member 5 (LILRB5) of Pan troglodytes (Chimpanzee).